We begin with the raw amino-acid sequence, 164 residues long: Crossover junction endodeoxyribonuclease RuvC (164 aa).

Residues aspartate 7, glutamate 67, and aspartate 140 contribute to the active site. 3 residues coordinate Mg(2+): aspartate 7, glutamate 67, and aspartate 140.

This sequence belongs to the RuvC family. In terms of assembly, homodimer which binds Holliday junction (HJ) DNA. The HJ becomes 2-fold symmetrical on binding to RuvC with unstacked arms; it has a different conformation from HJ DNA in complex with RuvA. In the full resolvosome a probable DNA-RuvA(4)-RuvB(12)-RuvC(2) complex forms which resolves the HJ. The cofactor is Mg(2+).

The protein resides in the cytoplasm. The enzyme catalyses Endonucleolytic cleavage at a junction such as a reciprocal single-stranded crossover between two homologous DNA duplexes (Holliday junction).. The RuvA-RuvB-RuvC complex processes Holliday junction (HJ) DNA during genetic recombination and DNA repair. Endonuclease that resolves HJ intermediates. Cleaves cruciform DNA by making single-stranded nicks across the HJ at symmetrical positions within the homologous arms, yielding a 5'-phosphate and a 3'-hydroxyl group; requires a central core of homology in the junction. The consensus cleavage sequence is 5'-(A/T)TT(C/G)-3'. Cleavage occurs on the 3'-side of the TT dinucleotide at the point of strand exchange. HJ branch migration catalyzed by RuvA-RuvB allows RuvC to scan DNA until it finds its consensus sequence, where it cleaves and resolves the cruciform DNA. This chain is Crossover junction endodeoxyribonuclease RuvC, found in Chloroflexus aurantiacus (strain ATCC 29364 / DSM 637 / Y-400-fl).